Here is a 313-residue protein sequence, read N- to C-terminus: 4-diphosphocytidyl-2-C-methyl-D-erythritol kinase (313 aa).

Residue Lys-10 is part of the active site. An ATP-binding site is contributed by 95–105; that stretch reads PVTAGLGGGSS. Asp-136 is a catalytic residue. A disordered region spans residues 289–313; the sequence is HPRVSPWRSPRSASSRSTRRSSRPT. A compositionally biased stretch (low complexity) spans 292–304; the sequence is VSPWRSPRSASSR.

Belongs to the GHMP kinase family. IspE subfamily.

The enzyme catalyses 4-CDP-2-C-methyl-D-erythritol + ATP = 4-CDP-2-C-methyl-D-erythritol 2-phosphate + ADP + H(+). It functions in the pathway isoprenoid biosynthesis; isopentenyl diphosphate biosynthesis via DXP pathway; isopentenyl diphosphate from 1-deoxy-D-xylulose 5-phosphate: step 3/6. Functionally, catalyzes the phosphorylation of the position 2 hydroxy group of 4-diphosphocytidyl-2C-methyl-D-erythritol. This chain is 4-diphosphocytidyl-2-C-methyl-D-erythritol kinase, found in Anaeromyxobacter dehalogenans (strain 2CP-1 / ATCC BAA-258).